Consider the following 199-residue polypeptide: Early activation antigen CD69 (199 aa).

A compositionally biased stretch (polar residues) spans 1-14 (MDSENCSITENSSS). The interval 1 to 20 (MDSENCSITENSSSHLERGQ) is disordered. The Cytoplasmic segment spans residues 1–40 (MDSENCSITENSSSHLERGQKDHGTSIHFEKHHEGSIQVS). The chain crosses the membrane as a helical; Signal-anchor for type II membrane protein span at residues 41–61 (IPWAVLIVVLITSLIIALIAL). Residues 62–199 (NVGKYNCPGL…FHWVCSKPSR (138 aa)) are Extracellular-facing. Cystine bridges form between Cys85–Cys96, Cys113–Cys194, and Cys173–Cys186. A C-type lectin domain is found at 92–195 (YKRTCYFFST…CEANFHWVCS (104 aa)). N-linked (GlcNAc...) asparagine glycosylation is found at Asn150, Asn166, and Asn180.

As to quaternary structure, homodimer; disulfide-linked. Interacts with S100A8 and S100A9. Interacts with galactin-1/LGALS1. Interacts with S1PR1; this interaction mediates S1PR1 degradation. Interacts with JAK3 and STAT5. In terms of processing, constitutive Ser/Thr phosphorylation in both mature thymocytes and activated T-lymphocytes. As to expression, expressed on the surface of activated T-cells, B-cells, natural killer cells, neutrophils and platelets. Present also in eosinophils.

Its subcellular location is the cell membrane. Its function is as follows. Transmembrane protein expressed mainly on T-cells resident in mucosa that plays an essential role in immune cell homeostasis. Rapidly expressed on the surface of platelets, T-lymphocytes and NK cells upon activation by various stimuli, such as antigen recognition or cytokine signaling, stimulates different signaling pathways in different cell types. Negatively regulates Th17 cell differentiation through its carbohydrate dependent interaction with galectin-1/LGALS1 present on immature dendritic cells. Association of CD69 cytoplasmic tail with the JAK3/STAT5 signaling pathway regulates the transcription of RORgamma/RORC and, consequently, differentiation toward the Th17 lineage. Also acts via the S100A8/S100A9 complex present on peripheral blood mononuclear cells to promote the conversion of naive CD4 T-cells into regulatory T-cells. Acts as an oxidized low-density lipoprotein (oxLDL) receptor in CD4 T-lymphocytes and negatively regulates the inflammatory response by inducing the expression of PDCD1 through the activation of NFAT. Participates in adipose tissue-derived mesenchymal stem cells (ASCs)-mediated protection against P.aeruginosa infection. Mechanistically, specifically recognizes P.aeruginosa to promote ERK1 activation, followed by granulocyte-macrophage colony-stimulating factor (GM-CSF) and other inflammatory cytokines secretion. In eosinophils, induces IL-10 production through the ERK1/2 pathway. Negatively regulates the chemotactic responses of effector lymphocytes and dendritic cells (DCs) to sphingosine 1 phosphate/S1P by acting as a S1PR1 receptor agonist and facilitating the internalization and degradation of the receptor. The polypeptide is Early activation antigen CD69 (Cd69) (Mus musculus (Mouse)).